Consider the following 37-residue polypeptide: M-oxotoxin-Ot2a (37 aa).

Expressed by the venom gland.

It localises to the secreted. Its function is as follows. Disrupts biological membranes, particularly those rich in phosphocholine. Has antimicrobial activity against Gram-negative bacterium E.coli, Gram-positive bacteria B.subtilis and S.aureus, and hemolytic activity against sheep, pig and guinea pig red blood cells. Has insecticidal activity against S.frugiperda ovarian cells by opening non-selective ion channels. Enhances the insecticidal activity of spider venom neurotoxic peptides. The polypeptide is M-oxotoxin-Ot2a (Oxyopes takobius (Lynx spider)).